The sequence spans 154 residues: Xanthine-guanine phosphoribosyltransferase (154 aa).

5-phospho-alpha-D-ribose 1-diphosphate contacts are provided by residues 38–39 (RG), K71, and 90–98 (DDLVDTGGT). Residue K71 coordinates GMP. D91 is a binding site for Mg(2+). Guanine is bound by residues D94 and I137. 2 residues coordinate xanthine: D94 and I137. GMP is bound by residues 94 to 98 (DTGGT) and 136 to 137 (WI).

It belongs to the purine/pyrimidine phosphoribosyltransferase family. XGPT subfamily. As to quaternary structure, homotetramer. Mg(2+) is required as a cofactor.

It is found in the cell inner membrane. It catalyses the reaction GMP + diphosphate = guanine + 5-phospho-alpha-D-ribose 1-diphosphate. It carries out the reaction XMP + diphosphate = xanthine + 5-phospho-alpha-D-ribose 1-diphosphate. The catalysed reaction is IMP + diphosphate = hypoxanthine + 5-phospho-alpha-D-ribose 1-diphosphate. Its pathway is purine metabolism; GMP biosynthesis via salvage pathway; GMP from guanine: step 1/1. It participates in purine metabolism; XMP biosynthesis via salvage pathway; XMP from xanthine: step 1/1. Functionally, purine salvage pathway enzyme that catalyzes the transfer of the ribosyl-5-phosphate group from 5-phospho-alpha-D-ribose 1-diphosphate (PRPP) to the N9 position of the 6-oxopurines guanine and xanthine to form the corresponding ribonucleotides GMP (guanosine 5'-monophosphate) and XMP (xanthosine 5'-monophosphate), with the release of PPi. To a lesser extent, also acts on hypoxanthine. The chain is Xanthine-guanine phosphoribosyltransferase from Buchnera aphidicola subsp. Schizaphis graminum (strain Sg).